Reading from the N-terminus, the 419-residue chain is Elongation factor Tu, chloroplastic (419 aa).

The tr-type G domain maps to 10–214 (KPHVNIGTIG…KVDEYIPTPD (205 aa)). The interval 19 to 26 (GHVDHGKT) is G1. A GTP-binding site is contributed by 19–26 (GHVDHGKT). Mg(2+) is bound at residue Thr26. Residues 60–64 (GITIN) form a G2 region. Residues 81–84 (DCPG) form a G3 region. Residues 81–85 (DCPGH) and 136–139 (NKED) each bind GTP. Residues 136–139 (NKED) form a G4 region. The G5 stretch occupies residues 174 to 176 (SAL).

It belongs to the TRAFAC class translation factor GTPase superfamily. Classic translation factor GTPase family. EF-Tu/EF-1A subfamily.

It localises to the plastid. Its subcellular location is the chloroplast. It carries out the reaction GTP + H2O = GDP + phosphate + H(+). In terms of biological role, GTP hydrolase that promotes the GTP-dependent binding of aminoacyl-tRNA to the A-site of ribosomes during protein biosynthesis. This is Elongation factor Tu, chloroplastic (tufA) from Tetradesmus obliquus (Green alga).